The chain runs to 884 residues: Probable leucine--tRNA ligase, cytoplasmic (884 aa).

The 'HIGH' region signature appears at 40–50; that stretch reads PYMNGKLHLGH. The short motif at 566–570 is the 'KMSKS' region element; sequence KMSKS. Residue lysine 569 coordinates ATP.

It belongs to the class-I aminoacyl-tRNA synthetase family.

The protein resides in the cytoplasm. It carries out the reaction tRNA(Leu) + L-leucine + ATP = L-leucyl-tRNA(Leu) + AMP + diphosphate. This is Probable leucine--tRNA ligase, cytoplasmic from Vairimorpha ceranae (strain BRL01) (Microsporidian parasite).